Consider the following 201-residue polypeptide: Molybdenum cofactor guanylyltransferase (201 aa).

GTP is bound by residues 14 to 16 (LAG), Lys31, and Asp104. Mg(2+) is bound at residue Asp104.

The protein belongs to the MobA family. Monomer. Mg(2+) serves as cofactor.

The protein localises to the cytoplasm. It catalyses the reaction Mo-molybdopterin + GTP + H(+) = Mo-molybdopterin guanine dinucleotide + diphosphate. Its function is as follows. Transfers a GMP moiety from GTP to Mo-molybdopterin (Mo-MPT) cofactor (Moco or molybdenum cofactor) to form Mo-molybdopterin guanine dinucleotide (Mo-MGD) cofactor. The protein is Molybdenum cofactor guanylyltransferase of Helicobacter pylori (strain ATCC 700392 / 26695) (Campylobacter pylori).